The sequence spans 91 residues: C-C motif chemokine 5 (91 aa).

Positions 1–23 (MKISAAALTIILTAAALCTPAPA) are cleaved as a signal peptide. Intrachain disulfides connect C33–C57 and C34–C73.

It belongs to the intercrine beta (chemokine CC) family. In terms of tissue distribution, T-cell and macrophage specific.

It localises to the secreted. Functionally, chemoattractant for blood monocytes, memory T-helper cells and eosinophils. Causes the release of histamine from basophils and activates eosinophils. May activate several chemokine receptors including CCR1, CCR3, CCR4 and CCR5. May also be an agonist of the G protein-coupled receptor GPR75. Together with GPR75, may play a role in neuron survival through activation of a downstream signaling pathway involving the PI3, Akt and MAP kinases. By activating GPR75 may also play a role in insulin secretion by islet cells. The sequence is that of C-C motif chemokine 5 (Ccl5) from Mus musculus (Mouse).